A 221-amino-acid polypeptide reads, in one-letter code: Ras-related protein Rab-27A (221 aa).

N-acetylserine is present on serine 2. Phosphoserine is present on serine 2. 16–24 (GDSGVGKTS) contacts GTP. The Effector region signature appears at 38-46 (FITTVGIDF). GTP is bound by residues 74–78 (DTAGQ), 133–136 (NKSD), and 163–165 (SAA). Cysteines 123 and 188 form a disulfide. Residues cysteine 219 and cysteine 221 are each lipidated (S-geranylgeranyl cysteine). Residue cysteine 221 is modified to Cysteine methyl ester.

Belongs to the small GTPase superfamily. Rab family. As to quaternary structure, binds SYTL1, SLAC2B, MYRIP, SYTL3, SYTL4 and SYTL5. Interacts with RPH3A and RPH3A. Binds MLPH and SYTL2. Interacts with UNC13D. Does not interact with the BLOC-3 complex (heterodimer of HPS1 and HPS4). Interacts (GDP-bound form preferentially) with DENND10. In terms of tissue distribution, high levels in eye, intestine, lung, pancreas and spleen, and low or absent in brain, liver, heart, kidney, and skeletal muscle.

The protein localises to the membrane. The protein resides in the melanosome. Its subcellular location is the late endosome. It localises to the lysosome. The catalysed reaction is GTP + H2O = GDP + phosphate + H(+). Its activity is regulated as follows. Regulated by guanine nucleotide exchange factors (GEFs) which promote the exchange of bound GDP for free GTP, GTPase activating proteins (GAPs) which increase the GTP hydrolysis activity, and GDP dissociation inhibitors which inhibit the dissociation of the nucleotide from the GTPase. Activated by GEFs such as DENND10. In terms of biological role, small GTPase which cycles between active GTP-bound and inactive GDP-bound states. In its active state, binds to a variety of effector proteins to regulate homeostasis of late endocytic pathway, including endosomal positioning, maturation and secretion. Plays a role in cytotoxic granule exocytosis in lymphocytes. Required for both granule maturation and granule docking and priming at the immunologic synapse. The chain is Ras-related protein Rab-27A (Rab27a) from Rattus norvegicus (Rat).